A 2184-amino-acid chain; its full sequence is Genome polyprotein (2184 aa).

Residue G2 is the site of N-myristoyl glycine; by host attachment. The Cytoplasmic segment spans residues 2–1494 (GAQVSTQKTG…HVSRAFICLQ (1493 aa)). An amphipathic alpha-helix region spans residues 566-582 (FYQSPVEGAIERAIARV). Residues H871 and D889 each act as for protease 2A activity in the active site. Residues C906 and C908 each coordinate Zn(2+). The For protease 2A activity role is filled by C960. The Zn(2+) site is built by C966 and H968. The segment at 1100–1172 (SNGWLKKFTE…EQSAPSQSDQ (73 aa)) is membrane-binding. The interval 1100–1238 (SNGWLKKFTE…SPGAGKSVAT (139 aa)) is oligomerization. The segment at 1121-1125 (AIKIQ) is RNA-binding. Residues 1204–1360 (EKKMSNYIQF…SMYSQNGKIN (157 aa)) form the SF3 helicase domain. 3 residues coordinate Zn(2+): C1368, C1380, and C1385. The C4-type; degenerate zinc finger occupies 1368 to 1385 (CDEECCPVNFKKCCPLVC). An RNA-binding region spans residues 1412–1419 (EYNHRHSV). The oligomerization stretch occupies residues 1423-1428 (LEALFQ). The stretch at 1495–1510 (ALTTFVSVAGIIYIIY) is an intramembrane region. Residues 1511 to 2184 (KLFAGFQGAY…TLRRKWLDSF (674 aa)) lie on the Cytoplasmic side of the membrane. The residue at position 1520 (Y1520) is an O-(5'-phospho-RNA)-tyrosine. The region spanning 1540 to 1718 (GPAFEFAVAM…FSAALLKHYF (179 aa)) is the Peptidase C3 domain. Catalysis depends on for protease 3C activity residues H1579, E1610, and C1686. Residues 1949-2065 (GHLIAFDYSG…SYPWPIDASL (117 aa)) form the RdRp catalytic domain. Residues D1955 and D2051 each contribute to the Mg(2+) site.

The protein belongs to the picornaviruses polyprotein family. Interacts with capsid protein VP1 and capsid protein VP3 to form heterotrimeric protomers. In terms of assembly, interacts with capsid protein VP0, and capsid protein VP3 to form heterotrimeric protomers. Five protomers subsequently associate to form pentamers which serve as building blocks for the capsid. Interacts with capsid protein VP2, capsid protein VP3 and capsid protein VP4 following cleavage of capsid protein VP0. Interacts with host CXADR. As to quaternary structure, interacts with capsid protein VP1 and capsid protein VP3 in the mature capsid. Interacts with capsid protein VP0 and capsid protein VP1 to form heterotrimeric protomers. Five protomers subsequently associate to form pentamers which serve as building blocks for the capsid. Interacts with capsid protein VP4 in the mature capsid. Interacts with protein 2C; this interaction may be important for virion morphogenesis. In terms of assembly, interacts with capsid protein VP1 and capsid protein VP3. As to quaternary structure, homodimer. Homohexamer; forms a hexameric ring structure with 6-fold symmetry characteristic of AAA+ ATPases. Interacts (via N-terminus) with host RTN3 (via reticulon domain); this interaction is important for viral replication. Interacts with capsid protein VP3; this interaction may be important for virion morphogenesis. In terms of assembly, interacts with protein 3CD. As to quaternary structure, homodimer. Interacts with host GBF1. Interacts (via GOLD domain) with host ACBD3 (via GOLD domain); this interaction allows the formation of a viral protein 3A/ACBD3 heterotetramer with a 2:2 stoichiometry, which will stimulate the recruitment of host PI4KB in order to synthesize PI4P at the viral RNA replication sites. Interacts with RNA-directed RNA polymerase. In terms of assembly, interacts with protein 3AB and with RNA-directed RNA polymerase. As to quaternary structure, interacts with Viral protein genome-linked and with protein 3CD. The cofactor is Mg(2+). Specific enzymatic cleavages in vivo by the viral proteases yield processing intermediates and the mature proteins. In terms of processing, myristoylation is required for the formation of pentamers during virus assembly. Further assembly of 12 pentamers and a molecule of genomic RNA generates the provirion. Post-translationally, during virion maturation, immature virions are rendered infectious following cleavage of VP0 into VP4 and VP2. This maturation seems to be an autocatalytic event triggered by the presence of RNA in the capsid and it is followed by a conformational change infectious virion. Myristoylation is required during RNA encapsidation and formation of the mature virus particle. In terms of processing, VPg is uridylylated by the polymerase into VPg-pUpU. This acts as a nucleotide-peptide primer for the genomic RNA replication.

It is found in the virion. The protein resides in the host cytoplasm. Its subcellular location is the host cytoplasmic vesicle membrane. It localises to the host nucleus. It carries out the reaction a ribonucleoside 5'-triphosphate + H2O = a ribonucleoside 5'-diphosphate + phosphate + H(+). It catalyses the reaction Selective cleavage of Tyr-|-Gly bond in the picornavirus polyprotein.. The catalysed reaction is RNA(n) + a ribonucleoside 5'-triphosphate = RNA(n+1) + diphosphate. The enzyme catalyses Selective cleavage of Gln-|-Gly bond in the poliovirus polyprotein. In other picornavirus reactions Glu may be substituted for Gln, and Ser or Thr for Gly.. Its activity is regulated as follows. Replication or transcription is subject to high level of random mutations by the nucleotide analog ribavirin. Its function is as follows. Forms an icosahedral capsid of pseudo T=3 symmetry with capsid proteins VP2 and VP3. The capsid is 300 Angstroms in diameter, composed of 60 copies of each capsid protein and enclosing the viral positive strand RNA genome. Capsid protein VP1 mainly forms the vertices of the capsid. Capsid protein VP1 interacts with host CXADR to provide virion attachment to target host cells. This attachment induces virion internalization. Tyrosine kinases are probably involved in the entry process. After binding to its receptor, the capsid undergoes conformational changes. Capsid protein VP1 N-terminus (that contains an amphipathic alpha-helix) and capsid protein VP4 are externalized. Together, they shape a pore in the host membrane through which viral genome is translocated to host cell cytoplasm. In terms of biological role, forms an icosahedral capsid of pseudo T=3 symmetry with capsid proteins VP2 and VP3. The capsid is 300 Angstroms in diameter, composed of 60 copies of each capsid protein and enclosing the viral positive strand RNA genome. Lies on the inner surface of the capsid shell. After binding to the host receptor, the capsid undergoes conformational changes. Capsid protein VP4 is released, Capsid protein VP1 N-terminus is externalized, and together, they shape a pore in the host membrane through which the viral genome is translocated into the host cell cytoplasm. Functionally, component of immature procapsids, which is cleaved into capsid proteins VP4 and VP2 after maturation. Allows the capsid to remain inactive before the maturation step. Its function is as follows. Cysteine protease that cleaves viral polyprotein and specific host proteins. It is responsible for the autocatalytic cleavage between the P1 and P2 regions, which is the first cleavage occurring in the polyprotein. Also cleaves the host translation initiation factor EIF4G1, in order to shut down the capped cellular mRNA translation. Inhibits the host nucleus-cytoplasm protein and RNA trafficking by cleaving host members of the nuclear pores. Counteracts stress granule formation probably by antagonizing its assembly or promoting its dissassembly. Cleaves and inhibits host IFIH1/MDA5, thereby inhibiting the type-I IFN production and the establishment of the antiviral state. Cleaves and inhibits host MAVS, thereby inhibiting the type-I IFN production and the establishment of the antiviral state. In terms of biological role, plays an essential role in the virus replication cycle by acting as a viroporin. Creates a pore in the host endoplasmic reticulum and as a consequence releases Ca2+ in the cytoplasm of infected cell. In turn, high levels of cytoplasmic calcium may trigger membrane trafficking and transport of viral ER-associated proteins to viroplasms, sites of viral genome replication. Induces and associates with structural rearrangements of intracellular membranes. Displays RNA-binding, nucleotide binding and NTPase activities. May play a role in virion morphogenesis and viral RNA encapsidation by interacting with the capsid protein VP3. Functionally, localizes the viral replication complex to the surface of membranous vesicles. Together with protein 3CD binds the Cis-Active RNA Element (CRE) which is involved in RNA synthesis initiation. Acts as a cofactor to stimulate the activity of 3D polymerase, maybe through a nucleid acid chaperone activity. Its function is as follows. Localizes the viral replication complex to the surface of membranous vesicles. It inhibits host cell endoplasmic reticulum-to-Golgi apparatus transport and causes the disassembly of the Golgi complex, possibly through GBF1 interaction. This would result in depletion of MHC, trail receptors and IFN receptors at the host cell surface. Plays an essential role in viral RNA replication by recruiting ACBD3 and PI4KB at the viral replication sites, thereby allowing the formation of the rearranged membranous structures where viral replication takes place. In terms of biological role, acts as a primer for viral RNA replication and remains covalently bound to viral genomic RNA. VPg is uridylylated prior to priming replication into VPg-pUpU. The oriI viral genomic sequence may act as a template for this. The VPg-pUpU is then used as primer on the genomic RNA poly(A) by the RNA-dependent RNA polymerase to replicate the viral genome. During genome replication, the VPg-RNA linkage is removed by the host TDP2, thereby accelerating replication. During the late stage of the replication cycle, host TDP2 is excluded from sites of viral RNA synthesis and encapsidation, allowing for the generation of progeny virions. Involved in the viral replication complex and viral polypeptide maturation. It exhibits protease activity with a specificity and catalytic efficiency that is different from protease 3C. Protein 3CD lacks polymerase activity. Protein 3CD binds to the 5'UTR of the viral genome. Functionally, replicates the viral genomic RNA on the surface of intracellular membranes. May form linear arrays of subunits that propagate along a strong head-to-tail interaction called interface-I. Covalently attaches UMP to a tyrosine of VPg, which is used to prime RNA synthesis. The positive stranded RNA genome is first replicated at virus induced membranous vesicles, creating a dsRNA genomic replication form. This dsRNA is then used as template to synthesize positive stranded RNA genomes. ss(+)RNA genomes are either translated, replicated or encapsidated. Its function is as follows. Major viral protease that mediates proteolytic processing of the polyprotein. Cleaves host EIF5B, contributing to host translation shutoff. Also cleaves host PABPC1, contributing to host translation shutoff. Cleaves host NLRP1, triggers host N-glycine-mediated degradation of the autoinhibitory NLRP1 N-terminal fragment. The chain is Genome polyprotein from Coxsackievirus B6 (strain Schmitt).